The following is a 545-amino-acid chain: Chaperonin GroEL (545 aa).

ATP contacts are provided by residues 29–32 (TLGP), Lys50, 86–90 (DGTTT), Gly413, and Asp495.

Belongs to the chaperonin (HSP60) family. In terms of assembly, forms a cylinder of 14 subunits composed of two heptameric rings stacked back-to-back. Interacts with the co-chaperonin GroES.

The protein localises to the cytoplasm. It carries out the reaction ATP + H2O + a folded polypeptide = ADP + phosphate + an unfolded polypeptide.. Together with its co-chaperonin GroES, plays an essential role in assisting protein folding. The GroEL-GroES system forms a nano-cage that allows encapsulation of the non-native substrate proteins and provides a physical environment optimized to promote and accelerate protein folding. The chain is Chaperonin GroEL from Borrelia garinii subsp. bavariensis (strain ATCC BAA-2496 / DSM 23469 / PBi) (Borreliella bavariensis).